The chain runs to 419 residues: Adenylosuccinate synthetase (419 aa).

GTP contacts are provided by residues 11-17 (GDEGKGK) and 39-41 (GHT). Aspartate 12 acts as the Proton acceptor in catalysis. 2 residues coordinate Mg(2+): aspartate 12 and glycine 39. IMP is bound by residues 12 to 15 (DEGK), 37 to 40 (NAGH), threonine 129, arginine 143, asparagine 218, threonine 233, and arginine 297. Residue histidine 40 is the Proton donor of the active site. 293 to 299 (VTTGRKR) contributes to the substrate binding site. Residues arginine 299, 325–327 (KLD), and 407–409 (GTG) contribute to the GTP site.

This sequence belongs to the adenylosuccinate synthetase family. In terms of assembly, homodimer. Mg(2+) serves as cofactor.

Its subcellular location is the cytoplasm. It carries out the reaction IMP + L-aspartate + GTP = N(6)-(1,2-dicarboxyethyl)-AMP + GDP + phosphate + 2 H(+). It participates in purine metabolism; AMP biosynthesis via de novo pathway; AMP from IMP: step 1/2. In terms of biological role, plays an important role in the de novo pathway and in the salvage pathway of purine nucleotide biosynthesis. Catalyzes the first committed step in the biosynthesis of AMP from IMP. The chain is Adenylosuccinate synthetase from Coccidioides posadasii (strain C735) (Valley fever fungus).